The sequence spans 506 residues: UBX domain-containing protein 4 (506 aa).

Residues Met1–Glu199 form an interaction with UBQLN1 region. The Cytoplasmic segment spans residues Met1–Thr411. Composition is skewed to polar residues over residues Ser114–Ala136 and Ser177–Arg189. The disordered stretch occupies residues Ser114–Asp193. The UBX domain occupies Asp313–Leu391. The stretch at Leu412–Phe432 is an intramembrane region. The Cytoplasmic segment spans residues Ser433–Met506. The segment at Pro437–Met506 is disordered. Low complexity predominate over residues Ala444–Ser456. A compositionally biased stretch (basic and acidic residues) spans Lys457–Asp489. Thr487 is subject to Phosphothreonine. The segment covering Asn496–Met506 has biased composition (polar residues).

As to quaternary structure, directly interacts with VCP. Interacts with UBQLN1. Forms a complex with VCP and UBQLN1.

The protein localises to the endoplasmic reticulum membrane. The protein resides in the nucleus envelope. In terms of biological role, involved in endoplasmic reticulum-associated protein degradation (ERAD). Acts as a platform to recruit both UBQLN1 and VCP to the ER during ERAD. This is UBX domain-containing protein 4 (Ubxn4) from Rattus norvegicus (Rat).